The following is a 172-amino-acid chain: 3-hydroxydecanoyl-[acyl-carrier-protein] dehydratase (172 aa).

The active site involves histidine 71.

The protein belongs to the thioester dehydratase family. FabA subfamily. As to quaternary structure, homodimer.

The protein resides in the cytoplasm. The catalysed reaction is a (3R)-hydroxyacyl-[ACP] = a (2E)-enoyl-[ACP] + H2O. It catalyses the reaction (3R)-hydroxydecanoyl-[ACP] = (2E)-decenoyl-[ACP] + H2O. The enzyme catalyses (2E)-decenoyl-[ACP] = (3Z)-decenoyl-[ACP]. The protein operates within lipid metabolism; fatty acid biosynthesis. Functionally, necessary for the introduction of cis unsaturation into fatty acids. Catalyzes the dehydration of (3R)-3-hydroxydecanoyl-ACP to E-(2)-decenoyl-ACP and then its isomerization to Z-(3)-decenoyl-ACP. Can catalyze the dehydratase reaction for beta-hydroxyacyl-ACPs with saturated chain lengths up to 16:0, being most active on intermediate chain length. The sequence is that of 3-hydroxydecanoyl-[acyl-carrier-protein] dehydratase from Vibrio vulnificus (strain CMCP6).